Reading from the N-terminus, the 658-residue chain is Secretin XcpQ (658 aa).

The signal sequence occupies residues Met1–Ala34. Residues Ala51 to Pro141 form an N0 region. The N1 stretch occupies residues Asp142–Gly205. An N2 region spans residues Ser206–Ala279. The N3 stretch occupies residues Asn280 to Ala365. The tract at residues Ser302 to Ser322 is disordered. Positions Asn307–Arg320 are enriched in gly residues. A secretin region spans residues Val368–Asp606. The segment at Ala608–Glu658 is s domain.

This sequence belongs to the bacterial secretin family. GSP D subfamily. In terms of assembly, forms a cylindrical channel with 15 subunits. The closed pentadecameric channel is 170 Angstroms long and 140 Angstroms in diameter.

Its subcellular location is the cell outer membrane. In terms of biological role, involved in a type II secretion system (T2SS, formerly general secretion pathway, GSP) for the export of proteins. This subunit forms the outer membrane channel. Among its substrates are PrpL, elastase LasB, chitin binding protein D (CbpD), aminopeptidase PaAP, and metalloprotease ImpA. This is Secretin XcpQ from Pseudomonas aeruginosa (strain ATCC 15692 / DSM 22644 / CIP 104116 / JCM 14847 / LMG 12228 / 1C / PRS 101 / PAO1).